We begin with the raw amino-acid sequence, 330 residues long: Aspartate--ammonia ligase (330 aa).

It belongs to the class-II aminoacyl-tRNA synthetase family. AsnA subfamily.

Its subcellular location is the cytoplasm. The catalysed reaction is L-aspartate + NH4(+) + ATP = L-asparagine + AMP + diphosphate + H(+). The protein operates within amino-acid biosynthesis; L-asparagine biosynthesis; L-asparagine from L-aspartate (ammonia route): step 1/1. The polypeptide is Aspartate--ammonia ligase (Serratia proteamaculans (strain 568)).